Reading from the N-terminus, the 443-residue chain is Phosphoglucosamine mutase (443 aa).

Ser102 functions as the Phosphoserine intermediate in the catalytic mechanism. Positions 102, 241, 243, and 245 each coordinate Mg(2+). Residue Ser102 is modified to Phosphoserine.

The protein belongs to the phosphohexose mutase family. Mg(2+) is required as a cofactor. In terms of processing, activated by phosphorylation.

The catalysed reaction is alpha-D-glucosamine 1-phosphate = D-glucosamine 6-phosphate. Functionally, catalyzes the conversion of glucosamine-6-phosphate to glucosamine-1-phosphate. This Polaromonas naphthalenivorans (strain CJ2) protein is Phosphoglucosamine mutase.